A 308-amino-acid polypeptide reads, in one-letter code: tRNA dimethylallyltransferase 1 (308 aa).

9 to 16 (GPTGVGKT) serves as a coordination point for ATP. Residue 11 to 16 (TGVGKT) coordinates substrate. An interaction with substrate tRNA region spans residues 34–37 (DSRQ).

It belongs to the IPP transferase family. In terms of assembly, monomer. It depends on Mg(2+) as a cofactor.

It catalyses the reaction adenosine(37) in tRNA + dimethylallyl diphosphate = N(6)-dimethylallyladenosine(37) in tRNA + diphosphate. Catalyzes the transfer of a dimethylallyl group onto the adenine at position 37 in tRNAs that read codons beginning with uridine, leading to the formation of N6-(dimethylallyl)adenosine (i(6)A). This Bacteroides thetaiotaomicron (strain ATCC 29148 / DSM 2079 / JCM 5827 / CCUG 10774 / NCTC 10582 / VPI-5482 / E50) protein is tRNA dimethylallyltransferase 1.